The sequence spans 1058 residues: Carbamoyl phosphate synthase large chain (1058 aa).

Residues 1–401 (MPKRTDIQKI…SLLKACRSLE (401 aa)) form a carboxyphosphate synthetic domain region. The ATP site is built by arginine 129, arginine 169, glycine 175, glycine 176, arginine 208, isoleucine 210, glutamate 215, glycine 241, isoleucine 242, histidine 243, glutamine 284, and glutamate 298. Residues 133–327 (KQLMEELEQP…IAKLAAKIAV (195 aa)) enclose the ATP-grasp 1 domain. Residues glutamine 284, glutamate 298, and asparagine 300 each coordinate Mg(2+). Mn(2+) is bound by residues glutamine 284, glutamate 298, and asparagine 300. The oligomerization domain stretch occupies residues 402–546 (IGVHHNEIPE…YSTYGWENES (145 aa)). The tract at residues 547–929 (IKSDKESVLV…ALYKAFEASY (383 aa)) is carbamoyl phosphate synthetic domain. The ATP-grasp 2 domain maps to 671 to 861 (EQALKELDIP…MAQVATKLIL (191 aa)). Residues arginine 707, serine 746, isoleucine 748, glutamate 752, glycine 777, valine 778, histidine 779, serine 780, glutamine 820, and glutamate 832 each contribute to the ATP site. Positions 820, 832, and 834 each coordinate Mg(2+). Residues glutamine 820, glutamate 832, and asparagine 834 each contribute to the Mn(2+) site. Residues 930–1058 (LHLPTFGNVV…ESRSFVTEAI (129 aa)) form the MGS-like domain. The interval 930-1058 (LHLPTFGNVV…ESRSFVTEAI (129 aa)) is allosteric domain.

It belongs to the CarB family. In terms of assembly, composed of two chains; the small (or glutamine) chain promotes the hydrolysis of glutamine to ammonia, which is used by the large (or ammonia) chain to synthesize carbamoyl phosphate. Tetramer of heterodimers (alpha,beta)4. The cofactor is Mg(2+). Requires Mn(2+) as cofactor.

The catalysed reaction is hydrogencarbonate + L-glutamine + 2 ATP + H2O = carbamoyl phosphate + L-glutamate + 2 ADP + phosphate + 2 H(+). The enzyme catalyses hydrogencarbonate + NH4(+) + 2 ATP = carbamoyl phosphate + 2 ADP + phosphate + 2 H(+). The protein operates within amino-acid biosynthesis; L-arginine biosynthesis; carbamoyl phosphate from bicarbonate: step 1/1. It functions in the pathway pyrimidine metabolism; UMP biosynthesis via de novo pathway; (S)-dihydroorotate from bicarbonate: step 1/3. Functionally, large subunit of the glutamine-dependent carbamoyl phosphate synthetase (CPSase). CPSase catalyzes the formation of carbamoyl phosphate from the ammonia moiety of glutamine, carbonate, and phosphate donated by ATP, constituting the first step of 2 biosynthetic pathways, one leading to arginine and/or urea and the other to pyrimidine nucleotides. The large subunit (synthetase) binds the substrates ammonia (free or transferred from glutamine from the small subunit), hydrogencarbonate and ATP and carries out an ATP-coupled ligase reaction, activating hydrogencarbonate by forming carboxy phosphate which reacts with ammonia to form carbamoyl phosphate. The polypeptide is Carbamoyl phosphate synthase large chain (Streptococcus pneumoniae (strain ATCC 700669 / Spain 23F-1)).